Reading from the N-terminus, the 390-residue chain is Transforming growth factor beta-1 proprotein (390 aa).

An N-terminal signal peptide occupies residues 1–29 (MPPSGLRLLPLLLPLLWLLMLTPGRPVAG). Residues 30 to 74 (LSTCKTIDMELVKRKRIEAIRGQILSKLRLASPPSQGDVPPGPLP) are straightjacket domain. The arm domain stretch occupies residues 75–271 (EAILALYNST…ATPLERAQHL (197 aa)). N-linked (GlcNAc...) asparagine glycans are attached at residues Asn-82, Asn-136, and Asn-176. The interval 226 to 252 (DSKDNTLQVDINGFSSGRRGDLATIHG) is bowtie tail. The Cell attachment site signature appears at 244-246 (RGD). Intrachain disulfides connect Cys-285/Cys-294, Cys-293/Cys-356, Cys-322/Cys-387, and Cys-326/Cys-389.

This sequence belongs to the TGF-beta family. As to quaternary structure, homodimer; disulfide-linked. Interacts with the serine proteases, HTRA1 and HTRA3: the interaction with either inhibits TGFB1-mediated signaling and the HTRA protease activity is required for this inhibition. May interact with THSD4; this interaction may lead to sequestration by FBN1 microfibril assembly and attenuation of TGFB signaling. Interacts with CD109, DPT and ASPN. Interacts with EFEMP2. Interacts with TSKU; the interaction contributes to regulation of the hair cycle. Interacts with TGFBR3. Homodimer; disulfide-linked. Interacts with transforming growth factor beta-1 (TGF-beta-1) chain; interaction is non-covalent and maintains TGF-beta-1 in a latent state; each latency-associated peptide (LAP) monomer interacts with TGF-beta-1 in the other monomer. Interacts with LTBP1; leading to regulation of TGF-beta-1 activation. Interacts with LRRC32/GARP; leading to regulation of TGF-beta-1 activation on the surface of activated regulatory T-cells (Tregs). Interacts with LRRC33/NRROS; leading to regulation of TGF-beta-1 activation in macrophages and microglia. Interacts (via cell attachment site) with integrins ITGAV and ITGB6 (ITGAV:ITGB6), leading to release of the active TGF-beta-1. Interacts with NREP; the interaction results in a decrease in TGFB1 autoinduction. Interacts with HSP90AB1; inhibits latent TGFB1 activation. In terms of assembly, homodimer; disulfide-linked. Interacts with TGF-beta receptors (TGFBR1 and TGFBR2), leading to signal transduction. Interacts with EFEMP2. Post-translationally, transforming growth factor beta-1 proprotein: The precursor proprotein is cleaved in the Golgi apparatus by FURIN to form Transforming growth factor beta-1 (TGF-beta-1) and Latency-associated peptide (LAP) chains, which remain non-covalently linked, rendering TGF-beta-1 inactive. In terms of processing, N-glycosylated. Deglycosylation leads to activation of Transforming growth factor beta-1 (TGF-beta-1); mechanisms triggering deglycosylation-driven activation of TGF-beta-1 are however unclear.

It is found in the secreted. It localises to the extracellular space. The protein localises to the extracellular matrix. In terms of biological role, transforming growth factor beta-1 proprotein: Precursor of the Latency-associated peptide (LAP) and Transforming growth factor beta-1 (TGF-beta-1) chains, which constitute the regulatory and active subunit of TGF-beta-1, respectively. Its function is as follows. Required to maintain the Transforming growth factor beta-1 (TGF-beta-1) chain in a latent state during storage in extracellular matrix. Associates non-covalently with TGF-beta-1 and regulates its activation via interaction with 'milieu molecules', such as LTBP1, LRRC32/GARP and LRRC33/NRROS, that control activation of TGF-beta-1. Interaction with LRRC33/NRROS regulates activation of TGF-beta-1 in macrophages and microglia. Interaction with LRRC32/GARP controls activation of TGF-beta-1 on the surface of activated regulatory T-cells (Tregs). Interaction with integrins (ITGAV:ITGB6 or ITGAV:ITGB8) results in distortion of the Latency-associated peptide chain and subsequent release of the active TGF-beta-1. Multifunctional protein that regulates the growth and differentiation of various cell types and is involved in various processes, such as normal development, immune function, microglia function and responses to neurodegeneration. Activation into mature form follows different steps: following cleavage of the proprotein in the Golgi apparatus, Latency-associated peptide (LAP) and Transforming growth factor beta-1 (TGF-beta-1) chains remain non-covalently linked rendering TGF-beta-1 inactive during storage in extracellular matrix. At the same time, LAP chain interacts with 'milieu molecules', such as LTBP1, LRRC32/GARP and LRRC33/NRROS that control activation of TGF-beta-1 and maintain it in a latent state during storage in extracellular milieus. TGF-beta-1 is released from LAP by integrins (ITGAV:ITGB6 or ITGAV:ITGB8): integrin-binding to LAP stabilizes an alternative conformation of the LAP bowtie tail and results in distortion of the LAP chain and subsequent release of the active TGF-beta-1. Once activated following release of LAP, TGF-beta-1 acts by binding to TGF-beta receptors (TGFBR1 and TGFBR2), which transduce signal. While expressed by many cells types, TGF-beta-1 only has a very localized range of action within cell environment thanks to fine regulation of its activation by Latency-associated peptide chain (LAP) and 'milieu molecules'. Plays an important role in bone remodeling: acts as a potent stimulator of osteoblastic bone formation, causing chemotaxis, proliferation and differentiation in committed osteoblasts. Can promote either T-helper 17 cells (Th17) or regulatory T-cells (Treg) lineage differentiation in a concentration-dependent manner. At high concentrations, leads to FOXP3-mediated suppression of RORC and down-regulation of IL-17 expression, favoring Treg cell development. At low concentrations in concert with IL-6 and IL-21, leads to expression of the IL-17 and IL-23 receptors, favoring differentiation to Th17 cells. Stimulates sustained production of collagen through the activation of CREB3L1 by regulated intramembrane proteolysis (RIP). Mediates SMAD2/3 activation by inducing its phosphorylation and subsequent translocation to the nucleus. Positively regulates odontoblastic differentiation in dental papilla cells, via promotion of IPO7-mediated translocation of phosphorylated SMAD2 to the nucleus and subsequent transcription of target genes. Can induce epithelial-to-mesenchymal transition (EMT) and cell migration in various cell types. This chain is Transforming growth factor beta-1 proprotein (TGFB1), found in Bos taurus (Bovine).